Here is a 477-residue protein sequence, read N- to C-terminus: Bifunctional protein HldE (477 aa).

The ribokinase stretch occupies residues 1–318 (MKVNLPAFER…ENAVRGRADT (318 aa)). ATP is bound at residue 195–198 (NLSE). The active site involves Asp264. Residues 344 to 477 (MTNGVFDILH…IKKIQTESEK (134 aa)) are cytidylyltransferase.

This sequence in the N-terminal section; belongs to the carbohydrate kinase PfkB family. In the C-terminal section; belongs to the cytidylyltransferase family. As to quaternary structure, homodimer.

The enzyme catalyses D-glycero-beta-D-manno-heptose 7-phosphate + ATP = D-glycero-beta-D-manno-heptose 1,7-bisphosphate + ADP + H(+). The catalysed reaction is D-glycero-beta-D-manno-heptose 1-phosphate + ATP + H(+) = ADP-D-glycero-beta-D-manno-heptose + diphosphate. Its pathway is nucleotide-sugar biosynthesis; ADP-L-glycero-beta-D-manno-heptose biosynthesis; ADP-L-glycero-beta-D-manno-heptose from D-glycero-beta-D-manno-heptose 7-phosphate: step 1/4. The protein operates within nucleotide-sugar biosynthesis; ADP-L-glycero-beta-D-manno-heptose biosynthesis; ADP-L-glycero-beta-D-manno-heptose from D-glycero-beta-D-manno-heptose 7-phosphate: step 3/4. Catalyzes the phosphorylation of D-glycero-D-manno-heptose 7-phosphate at the C-1 position to selectively form D-glycero-beta-D-manno-heptose-1,7-bisphosphate. In terms of biological role, catalyzes the ADP transfer from ATP to D-glycero-beta-D-manno-heptose 1-phosphate, yielding ADP-D-glycero-beta-D-manno-heptose. The chain is Bifunctional protein HldE from Salmonella enteritidis PT4 (strain P125109).